We begin with the raw amino-acid sequence, 1017 residues long: Protein HIRA (1017 aa).

WD repeat units follow at residues 11-53 and 68-107; these read HNGK…QEDD and NHLA…GPST. A Phosphoserine modification is found at Ser111. WD repeat units follow at residues 129-168, 172-211, 220-263, 266-322, and 326-367; these read NHSG…EILA, GHSG…LETS, GGTT…TNMD, GHRK…PLVV, and LFDK…DPLS. The interaction with ASF1A stretch occupies residues 421–479; that stretch reads REMGSATSVAGVVNGESLEDIRKNLLKKQVETRTADGRRRITPLCIAQLDTGDFSTAFF. The interval 421–729 is interaction with CCNA1; it reads REMGSATSVA…RLKCNREGKE (309 aa). Residues 439-475 are required for repression of histone gene transcription; that stretch reads EDIRKNLLKKQVETRTADGRRRITPLCIAQLDTGDFS. Residues 494-509 are compositionally biased toward low complexity; the sequence is SSHSSPQLLPLDSSTP. The disordered stretch occupies residues 494-555; the sequence is SSHSSPQLLP…AALSPSVLTT (62 aa). Positions 536-555 are enriched in polar residues; sequence KDSMNATSTPAALSPSVLTT. Residue Ser549 is modified to Phosphoserine. At Thr555 the chain carries Phosphothreonine; by CDK2. Phosphoserine is present on Ser557. Disordered regions lie at residues 570 to 589 and 604 to 625; these read TERS…TPTA and PRDL…KASS. A Phosphothreonine modification is found at Thr576. Ser584 is subject to Phosphoserine. Residue Thr586 is modified to Phosphothreonine. The interval 593 to 826 is interaction with histone H2B; that stretch reads LKEQNLVKEL…LAGSDMTVSQ (234 aa). 2 interaction with PAX3 regions span residues 594–739 and 740–828; these read KEQN…SRIL and TAAG…SQIL. The span at 604-619 shows a compositional bias: basic and acidic residues; sequence PRDLLESSSDSDEKVP. Phosphoserine occurs at positions 610, 611, 612, 614, 661, 675, and 687. Positions 738 to 1017 are interaction with histone H4; that stretch reads ILTAAGSCDV…QEQLDILRDK (280 aa).

The protein belongs to the WD repeat HIR1 family. In terms of assembly, interacts with histone H3-3B, PAX3 and PAX7. Interacts with histone H3.Y. Interacts with CCNA1, HIRIP3, NFU1/HIRIP5 and histone H2B. Part of a complex which includes ASF1A, CABIN1, histone H3.3, histone H4 and UBN1. In terms of processing, sumoylated. Phosphorylated by CDK2/CCNA1 and CDK2/CCNE1 on Thr-555 in vitro. Also phosphorylated on Thr-555 and Ser-687 in vivo. As to expression, expressed at high levels in kidney, pancreas and skeletal muscle and at lower levels in brain, heart, liver, lung, and placenta.

Its subcellular location is the nucleus. It is found in the PML body. In terms of biological role, cooperates with ASF1A to promote replication-independent chromatin assembly. Required for the periodic repression of histone gene transcription during the cell cycle. Required for the formation of senescence-associated heterochromatin foci (SAHF) and efficient senescence-associated cell cycle exit. The sequence is that of Protein HIRA (HIRA) from Homo sapiens (Human).